We begin with the raw amino-acid sequence, 352 residues long: Ion-translocating oxidoreductase complex subunit D (352 aa).

4 consecutive transmembrane segments (helical) span residues 20-40, 42-62, 69-91, and 123-143; these read IMLLVLIAALPGIAAQTWFFG, GTLFQIVLAAITALVAEAIVL, VASHLQDYSALLTGLLLAVSIPP, and PAMIGYVVLLISFPVQMTSWL. The residue at position 187 (Thr187) is an FMN phosphoryl threonine. The next 5 membrane-spanning stretches (helical) occupy residues 215 to 235, 242 to 262, 267 to 287, 301 to 321, and 322 to 342; these read LAGVGWQWVNLAWLVGGVFLL, WHIPVSFLLTLALCAALGWLF, LASPQLHLLSGATMLGAFFIL, LIFGALAGVLVWLIRSFGGYP, and DGVAFAVLLANITVPLIDYYT.

This sequence belongs to the NqrB/RnfD family. In terms of assembly, the complex is composed of six subunits: RsxA, RsxB, RsxC, RsxD, RsxE and RsxG. FMN is required as a cofactor.

The protein localises to the cell inner membrane. Its function is as follows. Part of a membrane-bound complex that couples electron transfer with translocation of ions across the membrane. Required to maintain the reduced state of SoxR. The sequence is that of Ion-translocating oxidoreductase complex subunit D from Salmonella typhi.